Consider the following 76-residue polypeptide: Conotoxin TsMLCL-03 (76 aa).

A signal peptide spans 1–19 (MLCLPVFIILLLLASPAAP). The propeptide occupies 20–44 (NPLERRIQSDLIRTALEDADMKTPK).

This sequence belongs to the conotoxin T superfamily. Contains 2 disulfide bonds that can be either 'C1-C3, C2-C4' or 'C1-C4, C2-C3', since these disulfide connectivities have been observed for conotoxins with cysteine framework V (for examples, see AC P0DQQ7 and AC P81755). As to expression, expressed by the venom duct.

It is found in the secreted. The polypeptide is Conotoxin TsMLCL-03 (Conus tessulatus (Tessellate cone)).